We begin with the raw amino-acid sequence, 364 residues long: Capsular polysaccharide phosphotransferase cps1A (364 aa).

It belongs to the stealth family.

Part of a capsular polysaccharide synthesis locus. This is Capsular polysaccharide phosphotransferase cps1A (cps1A) from Actinobacillus pleuropneumoniae (Haemophilus pleuropneumoniae).